Consider the following 116-residue polypeptide: Large ribosomal subunit protein bL19 (116 aa).

Belongs to the bacterial ribosomal protein bL19 family.

In terms of biological role, this protein is located at the 30S-50S ribosomal subunit interface and may play a role in the structure and function of the aminoacyl-tRNA binding site. This chain is Large ribosomal subunit protein bL19, found in Geobacillus sp. (strain WCH70).